A 250-amino-acid polypeptide reads, in one-letter code: Putative ABC transporter ATP-binding protein YjkB (250 aa).

The region spanning 13-245 (ISFRSVRKSY…PQHEAAKEFL (233 aa)) is the ABC transporter domain. 49–56 (GPSGSGKS) contacts ATP.

The protein belongs to the ABC transporter superfamily.

In Bacillus subtilis (strain 168), this protein is Putative ABC transporter ATP-binding protein YjkB (yjkB).